Here is a 704-residue protein sequence, read N- to C-terminus: Methionine--tRNA ligase (704 aa).

The 'HIGH' region signature appears at 17–27 (PYANGPIHLGH). The Zn(2+) site is built by Cys148, Cys151, Cys161, and Cys164. A 'KMSKS' region motif is present at residues 348–352 (KMSKS). Position 351 (Lys351) interacts with ATP. The 102-residue stretch at 603–704 (ELSKVELRVG…KDAKPGDRLK (102 aa)) folds into the tRNA-binding domain.

This sequence belongs to the class-I aminoacyl-tRNA synthetase family. MetG type 1 subfamily. Homodimer. The cofactor is Zn(2+).

Its subcellular location is the cytoplasm. It carries out the reaction tRNA(Met) + L-methionine + ATP = L-methionyl-tRNA(Met) + AMP + diphosphate. Is required not only for elongation of protein synthesis but also for the initiation of all mRNA translation through initiator tRNA(fMet) aminoacylation. The sequence is that of Methionine--tRNA ligase from Leptospira borgpetersenii serovar Hardjo-bovis (strain L550).